We begin with the raw amino-acid sequence, 1605 residues long: GTPase-activating protein pac-1 (1605 aa).

A required for localization to adherens junctions region spans residues 1–574 (MEEHHRRLHV…QRFIALFNSS (574 aa)). Disordered stretches follow at residues 293-430 (QRHP…ISTS), 529-556 (MRSG…LNAP), and 574-593 (SKTS…RSRT). Over residues 323–334 (SKEDPSEDTGHD) the composition is skewed to basic and acidic residues. Low complexity-rich tracts occupy residues 353–365 (RNAS…SSRS), 420–430 (TTSSTSSISTS), and 530–552 (RSGG…TSRS). Positions 599-726 (RFALPGTILQ…WISVLQSSSE (128 aa)) constitute a PH domain. 2 stretches are compositionally biased toward polar residues: residues 728-745 (GIAT…TTGR) and 846-855 (KNSQLQSPTA). 2 disordered regions span residues 728–752 (GIAT…NAVS) and 846–942 (KNSQ…AGAP). The span at 868 to 879 (SSSQTMATTSSS) shows a compositional bias: low complexity. Positions 908 to 917 (SGRKWKKSKA) are enriched in basic residues. Residues 928–941 (GSSSGSQQQGAAGA) show a composition bias toward low complexity. In terms of domain architecture, Rho-GAP spans 948–1146 (VRIADCPTGS…TLIHYNLWMF (199 aa)). Disordered stretches follow at residues 1152–1176 (TEDA…YGVG), 1207–1258 (EGKG…AASV), 1277–1339 (SRQT…RRKR), 1438–1533 (TSDY…ARRH), and 1554–1605 (GIRK…DELL). Over residues 1211 to 1229 (QKIKNMLRRNSRRDKSKSK) the composition is skewed to basic residues. 2 stretches are compositionally biased toward polar residues: residues 1244-1257 (GWTQ…SAAS) and 1278-1300 (RQTV…RLDQ). A compositionally biased stretch (low complexity) spans 1301–1312 (SPSLESSLGSLP). Residues 1438 to 1453 (TSDYSTTSSAPLSTNP) are compositionally biased toward polar residues. The segment covering 1461-1476 (DQPNSSSDYASSDPSP) has biased composition (low complexity). Composition is skewed to polar residues over residues 1480–1493 (NPST…SNLA) and 1500–1515 (HATS…MSRS). The span at 1558–1575 (SSPDVSRDEVSDDEKNHQ) shows a compositional bias: basic and acidic residues.

As to quaternary structure, associated with the catenin-cadherin complex consisting of hmr-1, hmp-1 and hmp-2; this is mediated by interaction with picc-1.

It localises to the cytoplasm. The protein resides in the cell junction. It is found in the adherens junction. Functionally, GTPase-activating protein for members of the Rho subfamily including Rac1, RhoA and cdc42 and other Ras-related subfamilies including let-60. Mediates radial (inner-outer) polarity and gastrulation by excluding par-6 from contacted cell surfaces; acts by inactivating cdc42 at inner cell surfaces which limits active cdc42 to outer cell surfaces devoid of cell-cell contacts, where cdc42 can bind and recruit par-6. Required for blastomere polarization. The protein is GTPase-activating protein pac-1 (pac-1) of Caenorhabditis elegans.